The primary structure comprises 437 residues: Glutamate-1-semialdehyde 2,1-aminomutase (437 aa).

Position 273 is an N6-(pyridoxal phosphate)lysine (Lys273).

Belongs to the class-III pyridoxal-phosphate-dependent aminotransferase family. HemL subfamily. As to quaternary structure, homodimer. Requires pyridoxal 5'-phosphate as cofactor.

The protein localises to the cytoplasm. It carries out the reaction (S)-4-amino-5-oxopentanoate = 5-aminolevulinate. It participates in porphyrin-containing compound metabolism; protoporphyrin-IX biosynthesis; 5-aminolevulinate from L-glutamyl-tRNA(Glu): step 2/2. The sequence is that of Glutamate-1-semialdehyde 2,1-aminomutase from Chlamydia abortus (strain DSM 27085 / S26/3) (Chlamydophila abortus).